The chain runs to 310 residues: Porphobilinogen deaminase (310 aa).

At Cys243 the chain carries S-(dipyrrolylmethanemethyl)cysteine.

This sequence belongs to the HMBS family. Monomer. It depends on dipyrromethane as a cofactor.

The catalysed reaction is 4 porphobilinogen + H2O = hydroxymethylbilane + 4 NH4(+). Its pathway is porphyrin-containing compound metabolism; protoporphyrin-IX biosynthesis; coproporphyrinogen-III from 5-aminolevulinate: step 2/4. Tetrapolymerization of the monopyrrole PBG into the hydroxymethylbilane pre-uroporphyrinogen in several discrete steps. The chain is Porphobilinogen deaminase from Mannheimia succiniciproducens (strain KCTC 0769BP / MBEL55E).